Reading from the N-terminus, the 421-residue chain is MSISNQSGLDILREVDDEGQENSFLRKTTRKIQQFFKSDPGYQSRKAEYNSPAKATGDVNINVTSQDWLSKLDRNLSIENLTGKSLGIVVVSGRNKGLIKNPFLGGLVDIVMRRQDKLYLKSVEQVSSEYSPMQEQVYEFKVDMPLVQKRLGAFLKKNRVDGLSLSMHFSTGNYSLPVLIRHVLLYDYYTDDMKDSLWRAMIIYVSRQVTSNKYTKFHLWCVQKRIGNIRMYLVRPGDVYSFQGQTSWAAICNKSYMCNIQLEQSPEVSVKSSLPKYSNEPIFQSKTISQEEVGWLLFMLSIGNHARAFPIQNYLANTVMETVLPVELRCPFLSRSVDCEIFQKNTKRRVMEKWRQEFKKDLNVCEELEFKNVKKSGYMQPLFDLTMPLGCFDSLETKEMFYLRHNIAGFQADLTPYPMRI.

The protein belongs to the UPF0300 family.

Its subcellular location is the cytoplasm. The polypeptide is UPF0300 protein C737.04 (Schizosaccharomyces pombe (strain 972 / ATCC 24843) (Fission yeast)).